A 141-amino-acid chain; its full sequence is High mobility group B protein 3 (141 aa).

2 stretches are compositionally biased toward basic and acidic residues: residues 1 to 12 (MKGAKSKAETRS) and 70 to 110 (GGEK…LEEG). Disordered stretches follow at residues 1–40 (MKGA…RPSS) and 54–141 (KEEH…EDDD). Positions 35 to 104 (PKRPSSAFFV…EYEKNMKAYN (70 aa)) form a DNA-binding region, HMG box. Position 122 is a phosphoserine (serine 122). A compositionally biased stretch (acidic residues) spans 124 to 141 (VNDEDDAEDGSEEEEDDD).

The protein belongs to the HMGB family. As to expression, expressed in lateral roots, root tips, stems, cotyledons, leaves and flowers (excluding ovary and pedicels).

It localises to the nucleus. It is found in the cytoplasm. Its subcellular location is the cytosol. In terms of biological role, binds preferentially double-stranded DNA. The protein is High mobility group B protein 3 (HMGB3) of Arabidopsis thaliana (Mouse-ear cress).